The primary structure comprises 84 residues: Small ribosomal subunit protein uS17 (84 aa).

Belongs to the universal ribosomal protein uS17 family. Part of the 30S ribosomal subunit.

In terms of biological role, one of the primary rRNA binding proteins, it binds specifically to the 5'-end of 16S ribosomal RNA. The protein is Small ribosomal subunit protein uS17 of Clostridioides difficile (strain 630) (Peptoclostridium difficile).